Consider the following 207-residue polypeptide: Uridine kinase (207 aa).

An ATP-binding site is contributed by Gly-11–Thr-18.

The protein belongs to the uridine kinase family.

Its subcellular location is the cytoplasm. It catalyses the reaction uridine + ATP = UMP + ADP + H(+). It carries out the reaction cytidine + ATP = CMP + ADP + H(+). It functions in the pathway pyrimidine metabolism; CTP biosynthesis via salvage pathway; CTP from cytidine: step 1/3. It participates in pyrimidine metabolism; UMP biosynthesis via salvage pathway; UMP from uridine: step 1/1. This chain is Uridine kinase, found in Staphylococcus aureus (strain Mu3 / ATCC 700698).